Here is a 130-residue protein sequence, read N- to C-terminus: Large ribosomal subunit protein eL32 (130 aa).

This sequence belongs to the eukaryotic ribosomal protein eL32 family.

The polypeptide is Large ribosomal subunit protein eL32 (rpl32e) (Pyrococcus horikoshii (strain ATCC 700860 / DSM 12428 / JCM 9974 / NBRC 100139 / OT-3)).